A 423-amino-acid chain; its full sequence is AP-1 complex subunit mu-1 (423 aa).

Ser2 carries the N-acetylserine modification. Thr152, Thr154, and Thr223 each carry phosphothreonine. Positions 168–421 (KNEVFLDVIE…ITQNGDYQLR (254 aa)) constitute an MHD domain.

Belongs to the adaptor complexes medium subunit family. As to quaternary structure, adaptor protein complex 1 (AP-1) is a heterotetramer composed of two large adaptins (gamma-type subunit AP1G1 and beta-type subunit AP1B1), a medium adaptin (mu-type subunit AP1M1 or AP1M2) and a small adaptin (sigma-type subunit AP1S1 or AP1S2 or AP1S3). Interacts with MARCHF11. In terms of processing, phosphorylation of membrane-bound AP1M1/AP1M2 increases its affinity for sorting signals.

Its subcellular location is the cytoplasmic vesicle. The protein localises to the clathrin-coated vesicle membrane. The protein resides in the golgi apparatus. Subunit of clathrin-associated adaptor protein complex 1 that plays a role in protein sorting in the trans-Golgi network (TGN) and endosomes. The AP complexes mediate the recruitment of clathrin to membranes and the recognition of sorting signals within the cytosolic tails of transmembrane cargo molecules. This chain is AP-1 complex subunit mu-1, found in Rattus norvegicus (Rat).